Consider the following 281-residue polypeptide: NAD-dependent protein deacetylase 1 (281 aa).

One can recognise a Deacetylase sirtuin-type domain in the interval 1–281; sequence MEEGAALEGV…FDQILDALDL (281 aa). NAD(+)-binding positions include 24 to 44 and 102 to 105; these read GAGVSTDSGIPDYRSPRGSLN and QNVD. H120 acts as the Proton acceptor in catalysis. Zn(2+)-binding residues include C128, C131, C183, and C186. NAD(+) contacts are provided by residues 224-226, 250-252, and V268; these read GSS and NGG.

The protein belongs to the sirtuin family. Class II subfamily. Requires Zn(2+) as cofactor.

It is found in the cytoplasm. It catalyses the reaction N(6)-acetyl-L-lysyl-[protein] + NAD(+) + H2O = 2''-O-acetyl-ADP-D-ribose + nicotinamide + L-lysyl-[protein]. Its function is as follows. NAD-dependent protein deacetylase which modulates the activities of several enzymes which are inactive in their acetylated form. The polypeptide is NAD-dependent protein deacetylase 1 (Corynebacterium efficiens (strain DSM 44549 / YS-314 / AJ 12310 / JCM 11189 / NBRC 100395)).